A 230-amino-acid polypeptide reads, in one-letter code: MTDDDRIKLEPSWKAALRGEFDQPYMHQLREFLRGEYAAGKEIYPPGPLIFNALNSTPLDQVKVVILGQDPYHGPGQAHGLCFSVQPGVATPPSLVNIYKELQRDLNIPIASHGYLQSWAEQGVLLLNTTMTVERANAASHAKKGWEFFTDRVIQVVSEQCPNVVFLLWGAHAQSKQKLIDGTKHLVLKSVHPSPLSAYRGFLGCGHFSRTNSFLEQRGMAPINWALPPL.

The Proton acceptor role is filled by Asp-70.

It belongs to the uracil-DNA glycosylase (UDG) superfamily. UNG family.

It is found in the cytoplasm. The enzyme catalyses Hydrolyzes single-stranded DNA or mismatched double-stranded DNA and polynucleotides, releasing free uracil.. Excises uracil residues from the DNA which can arise as a result of misincorporation of dUMP residues by DNA polymerase or due to deamination of cytosine. This is Uracil-DNA glycosylase from Pseudomonas putida (strain GB-1).